The primary structure comprises 205 residues: Adenylyl-sulfate kinase (205 aa).

Residue 31 to 38 (GLSGAGKS) coordinates ATP. Ser105 (phosphoserine intermediate) is an active-site residue.

It belongs to the APS kinase family.

The catalysed reaction is adenosine 5'-phosphosulfate + ATP = 3'-phosphoadenylyl sulfate + ADP + H(+). The protein operates within sulfur metabolism; hydrogen sulfide biosynthesis; sulfite from sulfate: step 2/3. Functionally, catalyzes the synthesis of activated sulfate. This chain is Adenylyl-sulfate kinase, found in Shewanella baltica (strain OS195).